The following is a 195-amino-acid chain: MNIENLAYNSSSDVLKAKIKNDKFPVNLTVQYWVDVSRGSNIYYKSSIFQTEIYPKSEKELIVPLTLGDLESGIYNITLYVRVNNFALFNYQKVPVILKKSISIEINGSKGVMQQKSNKESDEIINETSETHKNMTIDIKNLSNNKDNKSNIEESTAKNVKSNIETKKSADNNSILGKISGFFGSIVSTIFSLFG.

The helical transmembrane segment at 175 to 195 (ILGKISGFFGSIVSTIFSLFG) threads the bilayer.

It localises to the membrane. This is an uncharacterized protein from Methanocaldococcus jannaschii (strain ATCC 43067 / DSM 2661 / JAL-1 / JCM 10045 / NBRC 100440) (Methanococcus jannaschii).